Reading from the N-terminus, the 196-residue chain is Large ribosomal subunit protein mL66 (196 aa).

A mitochondrion-targeting transit peptide spans 1-34 (MAALRRLVSGCGRQLQAFLAGPAATGWLWLPARG).

Belongs to the bacterial ribosomal protein bS18 family. Mitochondrion-specific ribosomal protein mL66 subfamily. In terms of assembly, component of the mitochondrial ribosome small subunit (28S) which comprises a 12S rRNA and about 30 distinct proteins.

The protein localises to the mitochondrion. In Mus musculus (Mouse), this protein is Large ribosomal subunit protein mL66 (Mrps18a).